We begin with the raw amino-acid sequence, 309 residues long: Tagatose-6-phosphate kinase (309 aa).

This sequence belongs to the carbohydrate kinase PfkB family. LacC subfamily.

The enzyme catalyses D-tagatofuranose 6-phosphate + ATP = D-tagatofuranose 1,6-bisphosphate + ADP + H(+). It functions in the pathway carbohydrate metabolism; D-tagatose 6-phosphate degradation; D-glyceraldehyde 3-phosphate and glycerone phosphate from D-tagatose 6-phosphate: step 1/2. The chain is Tagatose-6-phosphate kinase from Streptococcus pneumoniae (strain Hungary19A-6).